A 185-amino-acid polypeptide reads, in one-letter code: Elongation factor P (185 aa).

The protein belongs to the elongation factor P family.

Its subcellular location is the cytoplasm. Its pathway is protein biosynthesis; polypeptide chain elongation. In terms of biological role, involved in peptide bond synthesis. Stimulates efficient translation and peptide-bond synthesis on native or reconstituted 70S ribosomes in vitro. Probably functions indirectly by altering the affinity of the ribosome for aminoacyl-tRNA, thus increasing their reactivity as acceptors for peptidyl transferase. This chain is Elongation factor P, found in Mesomycoplasma hyopneumoniae (strain J / ATCC 25934 / NCTC 10110) (Mycoplasma hyopneumoniae).